The sequence spans 453 residues: 5-hydroxytryptamine receptor 1 (453 aa).

Residues 1–36 (MKSLKSSTHDVPHPEHVVWAPPAYDEQHHLFFSHGT) are Extracellular-facing. The helical transmembrane segment at 37–57 (VLIGIVGSLIITVAVVGNVLV) threads the bilayer. At 58–74 (CLAIFTEPILSHSKSNF) the chain is on the cytoplasmic side. The chain crosses the membrane as a helical span at residues 75–94 (FIVSLAVADLLLALLVMTFA). Residues 95 to 110 (LVNDMYGYWLFGETFC) lie on the Extracellular side of the membrane. Residues Cys-110 and Cys-225 are joined by a disulfide bond. The helical transmembrane segment at 111 to 133 (FIWMSADVMCETASIFSICVISY) threads the bilayer. Topologically, residues 134–153 (DRLKQVQKPLHYEEFMTTTR) are cytoplasmic. A helical membrane pass occupies residues 154–175 (ALLIIACLWICSFVLSFVPIFL). Residues 176–223 (EWHELSVEEIKAIFKDNKTEKEKALEAHNFSSALNQTLGDNQKSNAKH) lie on the Extracellular side of the membrane. The helical transmembrane segment at 224 to 244 (VCLFDVHFTYSVIYSFICFYV) threads the bilayer. Residues 245 to 301 (PCTLMLTNYLRLFLIAQTHQVRIRSLQMTNPPQLRGQGASSYRNQGTQGSKAARTLT) lie on the Cytoplasmic side of the membrane. The helical transmembrane segment at 302 to 322 (IITGTFLACWLPFFIINPIAA) threads the bilayer. The Extracellular portion of the chain corresponds to 323-331 (ADEHLIPLE). Residues 332–352 (CFMVTIWLGYFNSSVNPIIYG) traverse the membrane as a helical segment. Topologically, residues 353-453 (TSNSKFRAAF…VFDSDTAFSS (101 aa)) are cytoplasmic. Positions 397–428 (DLSSSEHPSDACDTGRGKNSKGGDCATADPTK) are disordered. The segment covering 403-412 (HPSDACDTGR) has biased composition (basic and acidic residues).

The protein belongs to the G-protein coupled receptor 1 family. Reproductive system.

The protein resides in the cell membrane. This is one of the several different receptors for 5-hydroxytryptamine (serotonin). 5-HT plays important roles in various behavioral and physiological processes in aplysia. These include feeding, locomotion, circadian rhythm, learning and memory, synaptic plasticity, and synaptic growth. This receptor is mediated by G proteins that stimulate phospholipase C. This chain is 5-hydroxytryptamine receptor 1 (5HTB1), found in Aplysia californica (California sea hare).